A 189-amino-acid polypeptide reads, in one-letter code: Flavin prenyltransferase UbiX (189 aa).

Residues 11-13, S37, 88-91, and R123 contribute to the FMN site; these read GAS and SMRT. Y153 provides a ligand contact to dimethylallyl phosphate.

The protein belongs to the UbiX/PAD1 family.

It catalyses the reaction dimethylallyl phosphate + FMNH2 = prenylated FMNH2 + phosphate. Its function is as follows. Flavin prenyltransferase that catalyzes the synthesis of the prenylated FMN cofactor (prenyl-FMN) for 4-hydroxy-3-polyprenylbenzoic acid decarboxylase UbiD. The prenyltransferase is metal-independent and links a dimethylallyl moiety from dimethylallyl monophosphate (DMAP) to the flavin N5 and C6 atoms of FMN. This chain is Flavin prenyltransferase UbiX, found in Neisseria meningitidis serogroup B (strain ATCC BAA-335 / MC58).